Consider the following 388-residue polypeptide: S-adenosylmethionine synthase (388 aa).

Position 16 (histidine 16) interacts with ATP. Position 18 (aspartate 18) interacts with Mg(2+). Glutamate 44 contributes to the K(+) binding site. L-methionine-binding residues include glutamate 57 and glutamine 100. The interval 100–110 is flexible loop; the sequence is QSPEIAQGVDR. ATP is bound by residues 165–167, 231–232, aspartate 240, 246–247, alanine 263, and lysine 267; these read DAK, KF, and RK. Residue aspartate 240 participates in L-methionine binding. Residue lysine 271 participates in L-methionine binding.

This sequence belongs to the AdoMet synthase family. As to quaternary structure, homotetramer; dimer of dimers. It depends on Mg(2+) as a cofactor. K(+) is required as a cofactor.

It is found in the cytoplasm. It carries out the reaction L-methionine + ATP + H2O = S-adenosyl-L-methionine + phosphate + diphosphate. Its pathway is amino-acid biosynthesis; S-adenosyl-L-methionine biosynthesis; S-adenosyl-L-methionine from L-methionine: step 1/1. Its function is as follows. Catalyzes the formation of S-adenosylmethionine (AdoMet) from methionine and ATP. The overall synthetic reaction is composed of two sequential steps, AdoMet formation and the subsequent tripolyphosphate hydrolysis which occurs prior to release of AdoMet from the enzyme. This Psychrobacter sp. (strain PRwf-1) protein is S-adenosylmethionine synthase.